The sequence spans 104 residues: Nucleoid-associated protein LSL_1227 (104 aa).

The span at 1–19 (MMMRGMNMQSMMKQMQKLQ) shows a compositional bias: low complexity. The disordered stretch occupies residues 1–24 (MMMRGMNMQSMMKQMQKLQKNMKK).

The protein belongs to the YbaB/EbfC family. As to quaternary structure, homodimer.

The protein localises to the cytoplasm. The protein resides in the nucleoid. Its function is as follows. Binds to DNA and alters its conformation. May be involved in regulation of gene expression, nucleoid organization and DNA protection. This is Nucleoid-associated protein LSL_1227 from Ligilactobacillus salivarius (strain UCC118) (Lactobacillus salivarius).